Consider the following 392-residue polypeptide: Na(+)/H(+) antiporter NhaA 2 (392 aa).

A run of 11 helical transmembrane segments spans residues 20 to 40 (FFAA…AALI), 61 to 81 (LSVS…LVGL), 99 to 119 (ALPG…YVAF), 127 to 147 (IGGW…VLSL), 158 to 178 (IFLS…IALF), 181 to 201 (SDLS…LVAL), 209 to 229 (LLPY…SGIH), 265 to 285 (VAFA…LSGI), 298 to 318 (VALG…ALAI), 336 to 356 (GVAA…ALAF), and 365 to 385 (EVKV…VVVL).

Belongs to the NhaA Na(+)/H(+) (TC 2.A.33) antiporter family.

The protein localises to the cell inner membrane. It catalyses the reaction Na(+)(in) + 2 H(+)(out) = Na(+)(out) + 2 H(+)(in). Functionally, na(+)/H(+) antiporter that extrudes sodium in exchange for external protons. The protein is Na(+)/H(+) antiporter NhaA 2 of Pseudomonas syringae pv. syringae (strain B728a).